Consider the following 217-residue polypeptide: tRNA (guanine-N(7)-)-methyltransferase (217 aa).

S-adenosyl-L-methionine-binding residues include glutamate 45, glutamate 70, aspartate 97, and aspartate 119. Aspartate 119 is an active-site residue. Lysine 123 provides a ligand contact to substrate. The tract at residues 125–130 (RHEKRR) is interaction with RNA. Substrate-binding positions include aspartate 155 and 195 to 198 (TEYE).

The protein belongs to the class I-like SAM-binding methyltransferase superfamily. TrmB family.

The enzyme catalyses guanosine(46) in tRNA + S-adenosyl-L-methionine = N(7)-methylguanosine(46) in tRNA + S-adenosyl-L-homocysteine. The protein operates within tRNA modification; N(7)-methylguanine-tRNA biosynthesis. Functionally, catalyzes the formation of N(7)-methylguanine at position 46 (m7G46) in tRNA. The protein is tRNA (guanine-N(7)-)-methyltransferase of Lactobacillus helveticus (strain DPC 4571).